The primary structure comprises 158 residues: Transcription elongation factor GreA (158 aa).

Belongs to the GreA/GreB family.

Functionally, necessary for efficient RNA polymerase transcription elongation past template-encoded arresting sites. The arresting sites in DNA have the property of trapping a certain fraction of elongating RNA polymerases that pass through, resulting in locked ternary complexes. Cleavage of the nascent transcript by cleavage factors such as GreA or GreB allows the resumption of elongation from the new 3'terminus. GreA releases sequences of 2 to 3 nucleotides. The protein is Transcription elongation factor GreA of Macrococcus caseolyticus (strain JCSC5402) (Macrococcoides caseolyticum).